Here is a 561-residue protein sequence, read N- to C-terminus: Liver carboxylesterase 1F (561 aa).

The first 18 residues, 1–18 (MCLSFLFLVSLATCVVYG), serve as a signal peptide directing secretion. A glycan (N-linked (GlcNAc...) asparagine) is linked at Asn-79. Cysteines 87 and 116 form a disulfide. Ser-221 functions as the Acyl-ester intermediate in the catalytic mechanism. Cys-273 and Cys-284 are disulfide-bonded. Residues Glu-353 and His-466 each act as charge relay system in the active site. The short motif at 558-561 (HNEL) is the Prevents secretion from ER element.

Belongs to the type-B carboxylesterase/lipase family. Expressed in liver and kidney.

The protein resides in the lipid droplet. It is found in the cytoplasm. Its subcellular location is the cytosol. It localises to the endoplasmic reticulum. The protein localises to the microsome. The enzyme catalyses a carboxylic ester + H2O = an alcohol + a carboxylate + H(+). The catalysed reaction is all-trans-retinyl hexadecanoate + H2O = all-trans-retinol + hexadecanoate + H(+). In terms of biological role, involved in the detoxification of xenobiotics and in the activation of ester and amide prodrugs. Hydrolyzes retinyl esters. Hydrolyzes p-nitrophenyl butyrate (PNPB), triacylglycerol and monoacylglycerol. Shows higher activity against PNPB, a short-chain fatty acid ester, than against triolein, a long-chain fatty acid ester. Shows no detectable activity against diacylglycerol, cholesterol ester or phospholipids. May play a role in adipocyte lipolysis. The chain is Liver carboxylesterase 1F from Rattus norvegicus (Rat).